Reading from the N-terminus, the 258-residue chain is Acyl-[acyl-carrier-protein]--UDP-N-acetylglucosamine O-acyltransferase (258 aa).

This sequence belongs to the transferase hexapeptide repeat family. LpxA subfamily. In terms of assembly, homotrimer.

It is found in the cytoplasm. It carries out the reaction a (3R)-hydroxyacyl-[ACP] + UDP-N-acetyl-alpha-D-glucosamine = a UDP-3-O-[(3R)-3-hydroxyacyl]-N-acetyl-alpha-D-glucosamine + holo-[ACP]. The protein operates within glycolipid biosynthesis; lipid IV(A) biosynthesis; lipid IV(A) from (3R)-3-hydroxytetradecanoyl-[acyl-carrier-protein] and UDP-N-acetyl-alpha-D-glucosamine: step 1/6. In terms of biological role, involved in the biosynthesis of lipid A, a phosphorylated glycolipid that anchors the lipopolysaccharide to the outer membrane of the cell. This chain is Acyl-[acyl-carrier-protein]--UDP-N-acetylglucosamine O-acyltransferase, found in Azotobacter vinelandii (strain DJ / ATCC BAA-1303).